We begin with the raw amino-acid sequence, 90 residues long: Acylphosphatase (90 aa).

Positions glutamine 3–arginine 90 constitute an Acylphosphatase-like domain. Residues arginine 18 and asparagine 36 contribute to the active site.

The protein belongs to the acylphosphatase family.

It catalyses the reaction an acyl phosphate + H2O = a carboxylate + phosphate + H(+). This chain is Acylphosphatase (acyP), found in Actinobacillus succinogenes (strain ATCC 55618 / DSM 22257 / CCUG 43843 / 130Z).